Reading from the N-terminus, the 643-residue chain is Threonine--tRNA ligase (643 aa).

One can recognise a TGS domain in the interval Met1–Thr61. Residues Asp243–Pro534 form a catalytic region. Zn(2+) is bound by residues Cys334, His385, and His511.

Belongs to the class-II aminoacyl-tRNA synthetase family. In terms of assembly, homodimer. It depends on Zn(2+) as a cofactor.

The protein localises to the cytoplasm. The enzyme catalyses tRNA(Thr) + L-threonine + ATP = L-threonyl-tRNA(Thr) + AMP + diphosphate + H(+). Its function is as follows. Catalyzes the attachment of threonine to tRNA(Thr) in a two-step reaction: L-threonine is first activated by ATP to form Thr-AMP and then transferred to the acceptor end of tRNA(Thr). Also edits incorrectly charged L-seryl-tRNA(Thr). The protein is Threonine--tRNA ligase of Haemophilus influenzae (strain PittEE).